Here is a 1320-residue protein sequence, read N- to C-terminus: Clustered mitochondria protein homolog (1320 aa).

Disordered stretches follow at residues 166-241 (QQLE…KQKM), 552-582 (YGSM…TKSI), and 683-708 (LKEK…EDVQ). Over residues 185 to 194 (TEDKEEKETI) the composition is skewed to basic and acidic residues. Positions 202 to 213 (KKNKHHNKKGNK) are enriched in basic residues. Composition is skewed to basic and acidic residues over residues 226–241 (NEEK…KQKM), 565–575 (QQQKEENEENK), and 683–695 (LKEK…KEGI). In terms of domain architecture, Clu spans 379–649 (KTNRYDINKG…KATPRDPNYT (271 aa)). TPR repeat units follow at residues 955–988 (GLDL…YHQV), 997–1030 (GACF…TEKT), 1039–1072 (VQAY…TDLL), 1081–1114 (ASIY…QEFL), and 1123–1156 (STTY…LEKE). The interval 1204–1320 (KADQFKKSQP…SKPNKKSSKN (117 aa)) is disordered. Residues 1237–1247 (KPKKSQSKKSK) show a composition bias toward basic residues. Positions 1248–1311 (STNTTTTTNT…PTSSSAADSS (64 aa)) are enriched in low complexity.

Belongs to the CLU family.

Its subcellular location is the cytoplasm. MRNA-binding protein involved in proper cytoplasmic distribution of mitochondria. This is Clustered mitochondria protein homolog from Dictyostelium discoideum (Social amoeba).